Here is a 224-residue protein sequence, read N- to C-terminus: Biosynthetic peptidoglycan transglycosylase (224 aa).

A helical membrane pass occupies residues 9–29 (VLILVSFVLLIQLWIFCSLAW).

This sequence belongs to the glycosyltransferase 51 family.

The protein localises to the cell inner membrane. The catalysed reaction is [GlcNAc-(1-&gt;4)-Mur2Ac(oyl-L-Ala-gamma-D-Glu-L-Lys-D-Ala-D-Ala)](n)-di-trans,octa-cis-undecaprenyl diphosphate + beta-D-GlcNAc-(1-&gt;4)-Mur2Ac(oyl-L-Ala-gamma-D-Glu-L-Lys-D-Ala-D-Ala)-di-trans,octa-cis-undecaprenyl diphosphate = [GlcNAc-(1-&gt;4)-Mur2Ac(oyl-L-Ala-gamma-D-Glu-L-Lys-D-Ala-D-Ala)](n+1)-di-trans,octa-cis-undecaprenyl diphosphate + di-trans,octa-cis-undecaprenyl diphosphate + H(+). Its pathway is cell wall biogenesis; peptidoglycan biosynthesis. Functionally, peptidoglycan polymerase that catalyzes glycan chain elongation from lipid-linked precursors. The chain is Biosynthetic peptidoglycan transglycosylase from Acinetobacter baylyi (strain ATCC 33305 / BD413 / ADP1).